The sequence spans 64 residues: MATVIVEGDFEKALKKFKKIIEKEGILTEYKRREFYEKPSVKRKRKERAARKRLIKALKKKGLL.

This sequence belongs to the bacterial ribosomal protein bS21 family.

This is Small ribosomal subunit protein bS21 from Sulfurihydrogenibium sp. (strain YO3AOP1).